Reading from the N-terminus, the 360-residue chain is Phospho-N-acetylmuramoyl-pentapeptide-transferase (360 aa).

10 consecutive transmembrane segments (helical) span residues 21–41 (YLSF…LWMG), 73–93 (TMGG…WADL), 94–114 (TNPY…VGFV), 132–152 (WKYF…YAHG), 168–188 (VMPQ…VGTS), 199–219 (GLAI…AWAT), 239–259 (LVVV…FNTY), 263–283 (VFMG…IAVL), 288–308 (FVLV…ILQV), and 338–358 (VIVR…ATLK).

Belongs to the glycosyltransferase 4 family. MraY subfamily. The cofactor is Mg(2+).

The protein localises to the cell inner membrane. It carries out the reaction UDP-N-acetyl-alpha-D-muramoyl-L-alanyl-gamma-D-glutamyl-meso-2,6-diaminopimeloyl-D-alanyl-D-alanine + di-trans,octa-cis-undecaprenyl phosphate = di-trans,octa-cis-undecaprenyl diphospho-N-acetyl-alpha-D-muramoyl-L-alanyl-D-glutamyl-meso-2,6-diaminopimeloyl-D-alanyl-D-alanine + UMP. It functions in the pathway cell wall biogenesis; peptidoglycan biosynthesis. Functionally, catalyzes the initial step of the lipid cycle reactions in the biosynthesis of the cell wall peptidoglycan: transfers peptidoglycan precursor phospho-MurNAc-pentapeptide from UDP-MurNAc-pentapeptide onto the lipid carrier undecaprenyl phosphate, yielding undecaprenyl-pyrophosphoryl-MurNAc-pentapeptide, known as lipid I. In Vibrio cholerae serotype O1 (strain M66-2), this protein is Phospho-N-acetylmuramoyl-pentapeptide-transferase.